Here is a 1167-residue protein sequence, read N- to C-terminus: Integrin alpha-E (1167 aa).

The first 19 residues, 1-19, serve as a signal peptide directing secretion; the sequence is MKWLFHTLLCMASLKPQGA. Over 20–1114 the chain is Extracellular; it reads FNLDVDWAWV…IFLKEEETRS (1095 aa). 2 FG-GAP repeats span residues 27 to 81 and 84 to 142; these read AWVT…PDEI and QPVE…LQAQ. N51 carries an N-linked (GlcNAc...) asparagine glycan. 2 disulfides stabilise this stretch: C72-C83 and C130-C164. The tract at residues 149-192 is X-domain (extra domain); it reads EGFLDPGAHVDSGDYCRSKGGSTGEEKKSARRRRTVEEEDEEED. A disordered region spans residues 163-191; that stretch reads YCRSKGGSTGEEKKSARRRRTVEEEDEEE. Positions 193–382 constitute a VWFA domain; it reads GTEIAIVLDG…SKLQQHIVHM (190 aa). Residues N256, N314, N341, N364, N418, and N437 are each glycosylated (N-linked (GlcNAc...) asparagine). The FG-GAP 3 repeat unit spans residues 383-435; sequence EGTVGDALQYQLAQTGFSAQILDKGQVLLGTVGAFNWSGGALLYSTQNGRGCF. FG-GAP repeat units lie at residues 438 to 491, 492 to 552, 555 to 619, and 623 to 683; these read QTAK…REED, AFVR…DASF, AHTL…GLYD, and QQIR…FTPD. D514, D516, D518, D522, D578, N580, D582, D586, D646, N648, D650, and D654 together coordinate Ca(2+). C698 and C754 are joined by a disulfide. Residues N718 and N773 are each glycosylated (N-linked (GlcNAc...) asparagine). C814 and C820 are disulfide-bonded. N-linked (GlcNAc...) asparagine glycosylation is found at N829 and N846. An intrachain disulfide couples C884 to C898. N-linked (GlcNAc...) asparagine glycans are attached at residues N911, N925, N968, and N1013. 2 cysteine pairs are disulfide-bonded: C998-C1023 and C1031-C1047. N-linked (GlcNAc...) asparagine glycosylation is found at N1055 and N1086. The chain crosses the membrane as a helical span at residues 1115 to 1137; the sequence is LPLIIGSSIGGLLVLVVIIAILF. The Cytoplasmic portion of the chain corresponds to 1138–1167; that stretch reads KCGFFKRKYQQLNLESTRRAQLKADSLLQD. The short motif at 1140–1144 is the GFFKR motif element; that stretch reads GFFKR.

It belongs to the integrin alpha chain family. As to quaternary structure, heterodimer of an alpha and a beta subunit. The alpha subunit is composed of a heavy and a light chains linked by a disulfide bond. Alpha-E associates with beta-7.

The protein localises to the membrane. Its function is as follows. Integrin alpha-E/beta-7 is a receptor for E-cadherin. It mediates adhesion of intra-epithelial T-lymphocytes to epithelial cell monolayers. Mice expressing a null mutation of the alpha-E subunit gene exhibit a marked reduction in the numbers of intraepithelial lymphocytes in the gut and in the development of gut-associated lymphoid aggregates, supporting a specific role for this integrin in mediating retention of lymphocytes in the intestinal wall. The chain is Integrin alpha-E (Itgae) from Mus musculus (Mouse).